Here is a 304-residue protein sequence, read N- to C-terminus: Porphobilinogen deaminase (304 aa).

At cysteine 240 the chain carries S-(dipyrrolylmethanemethyl)cysteine.

The protein belongs to the HMBS family. Monomer. Dipyrromethane serves as cofactor.

It carries out the reaction 4 porphobilinogen + H2O = hydroxymethylbilane + 4 NH4(+). The protein operates within porphyrin-containing compound metabolism; protoporphyrin-IX biosynthesis; coproporphyrinogen-III from 5-aminolevulinate: step 2/4. In terms of biological role, tetrapolymerization of the monopyrrole PBG into the hydroxymethylbilane pre-uroporphyrinogen in several discrete steps. The sequence is that of Porphobilinogen deaminase from Xanthomonas euvesicatoria pv. vesicatoria (strain 85-10) (Xanthomonas campestris pv. vesicatoria).